A 124-amino-acid chain; its full sequence is MNIPQDLKYTKTHEWVKIDGNKAKVGITDFAQYEITDVVHVELPEIGKQVKKAQPAAVVESVKSAFDIYSPLSGKILEVNDSVLRSPEVINQSPYENGYLFIIEFTDEKEIADLLEADSYKNLI.

The region spanning 22-104 (KAKVGITDFA…YENGYLFIIE (83 aa)) is the Lipoyl-binding domain. At lysine 63 the chain carries N6-lipoyllysine.

It belongs to the GcvH family. As to quaternary structure, the glycine cleavage system is composed of four proteins: P, T, L and H. Requires (R)-lipoate as cofactor.

Its function is as follows. The glycine cleavage system catalyzes the degradation of glycine. The H protein shuttles the methylamine group of glycine from the P protein to the T protein. The polypeptide is Glycine cleavage system H protein (Endomicrobium trichonymphae).